We begin with the raw amino-acid sequence, 212 residues long: Protein HP-25 homolog 1 (212 aa).

The first 34 residues, 1-34 (MPGGRRRVGSMNIAGFWILAQFVLLLVANVKSSA), serve as a signal peptide directing secretion. A disordered region spans residues 36-66 (SELCGPRGARGPPGLSGLPGPPGYTGPIGMP). Low complexity predominate over residues 40–53 (GPRGARGPPGLSGL). The 37-residue stretch at 40 to 76 (GPRGARGPPGLSGLPGPPGYTGPIGMPGLTGRPGLPG) folds into the Collagen-like domain. In terms of domain architecture, C1q spans 82-212 (PPLPQSAFSV…VFYGFLLNGN (131 aa)). Asn125 carries N-linked (GlcNAc...) asparagine glycosylation.

The protein resides in the secreted. The polypeptide is Protein HP-25 homolog 1 (Bos taurus (Bovine)).